The primary structure comprises 105 residues: Putative pterin-4-alpha-carbinolamine dehydratase (105 aa).

Belongs to the pterin-4-alpha-carbinolamine dehydratase family.

The enzyme catalyses (4aS,6R)-4a-hydroxy-L-erythro-5,6,7,8-tetrahydrobiopterin = (6R)-L-erythro-6,7-dihydrobiopterin + H2O. The chain is Putative pterin-4-alpha-carbinolamine dehydratase from Sinorhizobium medicae (strain WSM419) (Ensifer medicae).